The chain runs to 542 residues: Phosphoenolpyruvate carboxykinase (ATP) (542 aa).

3 residues coordinate substrate: R67, Y208, and K214. Residues K214, H233, and 249–257 (GLSGTGKTT) contribute to the ATP site. Positions 214 and 233 each coordinate Mn(2+). D270 lines the Mn(2+) pocket. Residues E298, R334, 450–451 (RI), and T456 contribute to the ATP site. Residue R334 participates in substrate binding.

It belongs to the phosphoenolpyruvate carboxykinase (ATP) family. As to quaternary structure, monomer. It depends on Mn(2+) as a cofactor.

The protein localises to the cytoplasm. The catalysed reaction is oxaloacetate + ATP = phosphoenolpyruvate + ADP + CO2. It functions in the pathway carbohydrate biosynthesis; gluconeogenesis. Functionally, involved in the gluconeogenesis. Catalyzes the conversion of oxaloacetate (OAA) to phosphoenolpyruvate (PEP) through direct phosphoryl transfer between the nucleoside triphosphate and OAA. In Vibrio vulnificus (strain YJ016), this protein is Phosphoenolpyruvate carboxykinase (ATP).